The sequence spans 737 residues: Phosphoribosylformylglycinamidine synthase subunit PurL (737 aa).

His50 is an active-site residue. Residues Tyr53 and Lys92 each coordinate ATP. Glu94 provides a ligand contact to Mg(2+). Substrate is bound by residues 95 to 98 (SHNH) and Arg117. His96 acts as the Proton acceptor in catalysis. Asp118 lines the Mg(2+) pocket. A substrate-binding site is contributed by Gln241. Asp269 is a Mg(2+) binding site. 313–315 (ESQ) contributes to the substrate binding site. 2 residues coordinate ATP: Asp494 and Gly531. Asn532 contributes to the Mg(2+) binding site. Ser534 lines the substrate pocket.

Belongs to the FGAMS family. Monomer. Part of the FGAM synthase complex composed of 1 PurL, 1 PurQ and 2 PurS subunits.

The protein resides in the cytoplasm. It carries out the reaction N(2)-formyl-N(1)-(5-phospho-beta-D-ribosyl)glycinamide + L-glutamine + ATP + H2O = 2-formamido-N(1)-(5-O-phospho-beta-D-ribosyl)acetamidine + L-glutamate + ADP + phosphate + H(+). Its pathway is purine metabolism; IMP biosynthesis via de novo pathway; 5-amino-1-(5-phospho-D-ribosyl)imidazole from N(2)-formyl-N(1)-(5-phospho-D-ribosyl)glycinamide: step 1/2. Its function is as follows. Part of the phosphoribosylformylglycinamidine synthase complex involved in the purines biosynthetic pathway. Catalyzes the ATP-dependent conversion of formylglycinamide ribonucleotide (FGAR) and glutamine to yield formylglycinamidine ribonucleotide (FGAM) and glutamate. The FGAM synthase complex is composed of three subunits. PurQ produces an ammonia molecule by converting glutamine to glutamate. PurL transfers the ammonia molecule to FGAR to form FGAM in an ATP-dependent manner. PurS interacts with PurQ and PurL and is thought to assist in the transfer of the ammonia molecule from PurQ to PurL. The chain is Phosphoribosylformylglycinamidine synthase subunit PurL from Nitrobacter winogradskyi (strain ATCC 25391 / DSM 10237 / CIP 104748 / NCIMB 11846 / Nb-255).